Here is a 385-residue protein sequence, read N- to C-terminus: Leucine aminopeptidase 1 (385 aa).

A signal peptide spans 1-14; that stretch reads MKFLTLALSATATA. A propeptide spanning residues 15–85 is cleaved from the precursor; it reads MIIVNPEQQP…YGTLHTTRVV (71 aa). Zn(2+) contacts are provided by H185, D204, E243, and D270. C319 and C323 form a disulfide bridge. H352 lines the Zn(2+) pocket.

This sequence belongs to the peptidase M28 family. M28E subfamily. As to quaternary structure, monomer. Requires Zn(2+) as cofactor.

Its subcellular location is the secreted. Extracellular aminopeptidase that allows assimilation of proteinaceous substrates. This is Leucine aminopeptidase 1 (lap1) from Penicillium rubens (strain ATCC 28089 / DSM 1075 / NRRL 1951 / Wisconsin 54-1255) (Penicillium chrysogenum).